Here is a 192-residue protein sequence, read N- to C-terminus: Small ribosomal subunit protein uS5 (192 aa).

One can recognise an S5 DRBM domain in the interval 20 to 83; it reads FVDRLVHINR…EAAKRGLIRV (64 aa). Positions 165 to 192 are disordered; that stretch reads ARRGLKVSALQARRRDAEPGSADSADAA.

It belongs to the universal ribosomal protein uS5 family. As to quaternary structure, part of the 30S ribosomal subunit. Contacts proteins S4 and S8.

In terms of biological role, with S4 and S12 plays an important role in translational accuracy. Functionally, located at the back of the 30S subunit body where it stabilizes the conformation of the head with respect to the body. This is Small ribosomal subunit protein uS5 from Methylobacterium sp. (strain 4-46).